The chain runs to 29 residues: Mycofactocin precursor peptide (29 aa).

It belongs to the mycofactocin precursor peptide family. In terms of processing, the post-translational modifications that lead to mycofactocin involve oxidative decarboxylation of the C-terminal tyrosine residue catalyzed by MftC, introduction of a tyramine-valine cross-link, removal of the modified C-terminal dipeptide by MftE. The released dipeptide then undergoes oxidative deamination by MftD, glycosylation by MftF and methylation by an unknown enzyme.

In terms of biological role, precursor peptide that leads to mycofactocin (MFT) after extensive post-translational modifications by enzymes encoded by adjacent genes. Mycofactocin acts as a redox cofactor of nicotinamide-dependent oxidoreductases encoded in the same locus. The sequence is that of Mycofactocin precursor peptide from Mycobacterium tuberculosis (strain ATCC 25618 / H37Rv).